Reading from the N-terminus, the 562-residue chain is MASAASSLPLLVSSLLLALFALGAHADVKRYQFDIVMSNVSRLCHEKAMVTVNGSYPGPTIYAREGDRVIVNVTNHVKHNMTIHWHGLKQRRNGWADGPAYVTQCPIGSGGSYVYDFNVTRQRGTLWWHAHIAWMRATVHGAIVILPAAGVPYPFPKPDDEAEIVLGEWWHADVETVERQGSMLGMAPNMSDAHTINGKPGPLVPFCSEKHTYALQVQSGKTYLLRIINAAVNDELFFSIAGHNMTVVEIDATYTKPFAASTVQLSPGQTMNVLVSADQSPGRYFMVAKPFNDVPIPADNKTATAILQYAGVPTSVVPALPQTMPATNSTGSVAAFHDKLRSLNSPRYPADVPLAVDRHLLYTIGLNIDPCETCLNRSRLAASLNNITFVMPRTALLQAHYYGQKGVFAADFPDRPPARFNYTGVPLTAGLGTSLGTRLSKIAYNATVELVLQDTNLLSVESHPFHLHGYNFFVVGRGVGNFDPAKDPAKYNLVDPPERNTVGVPAGGWTAIRFRADNPGVWFLHCHLEVHTSWGLKMAFLVEDGSGPDESVLPPPKDLPKC.

The N-terminal stretch at 1 to 26 is a signal peptide; that stretch reads MASAASSLPLLVSSLLLALFALGAHA. Plastocyanin-like domains follow at residues 34–150 and 160–312; these read DIVM…PAAG and DEAE…YAGV. 4 N-linked (GlcNAc...) asparagine glycosylation sites follow: Asn39, Asn53, Asn72, and Asn80. His84 and His86 together coordinate Cu cation. Asn118 carries an N-linked (GlcNAc...) asparagine glycan. Cu cation is bound by residues His129 and His131. Residues Asn189, Asn244, Asn300, Asn328, Asn376, Asn386, Asn421, and Asn445 are each glycosylated (N-linked (GlcNAc...) asparagine). The Plastocyanin-like 3 domain occupies 411–546; that stretch reads DFPDRPPARF…KMAFLVEDGS (136 aa). Residues His463, His466, His468, His525, Cys526, His527, and His531 each contribute to the Cu cation site.

Belongs to the multicopper oxidase family. The cofactor is Cu cation.

It localises to the secreted. Its subcellular location is the extracellular space. The protein resides in the apoplast. The catalysed reaction is 4 hydroquinone + O2 = 4 benzosemiquinone + 2 H2O. Its function is as follows. Lignin degradation and detoxification of lignin-derived products. The protein is Laccase-2 (LAC2) of Oryza sativa subsp. japonica (Rice).